The sequence spans 407 residues: Elongation factor Tu, chloroplastic (407 aa).

The tr-type G domain maps to 10–212 (KPHVNIGTIG…SVDNYIPAPE (203 aa)). The segment at 19–26 (GHVDHGKT) is G1. GTP is bound at residue 19–26 (GHVDHGKT). Thr26 serves as a coordination point for Mg(2+). A G2 region spans residues 59–63 (GITIN). Residues 80–83 (DCPG) form a G3 region. Residues 80–84 (DCPGH) and 135–138 (NKAD) contribute to the GTP site. The G4 stretch occupies residues 135 to 138 (NKAD). A G5 region spans residues 173–175 (SAL).

This sequence belongs to the TRAFAC class translation factor GTPase superfamily. Classic translation factor GTPase family. EF-Tu/EF-1A subfamily.

The protein resides in the plastid. It is found in the chloroplast. It carries out the reaction GTP + H2O = GDP + phosphate + H(+). Functionally, GTP hydrolase that promotes the GTP-dependent binding of aminoacyl-tRNA to the A-site of ribosomes during protein biosynthesis. This chain is Elongation factor Tu, chloroplastic (tufA), found in Emiliania huxleyi (Coccolithophore).